Here is a 237-residue protein sequence, read N- to C-terminus: Ribonuclease 3 (237 aa).

Residues 5–136 (VDELSARLGV…VIAALFLDQG (132 aa)) form the RNase III domain. Glutamate 49 is a binding site for Mg(2+). Residue aspartate 53 is part of the active site. The Mg(2+) site is built by aspartate 122 and glutamate 125. The active site involves glutamate 125. The DRBM domain occupies 163-232 (DYKSRLQARI…ARAALDALEG (70 aa)). Residues 185 to 208 (IDRSGPEHRPEFTVEVRAGEERLG) are compositionally biased toward basic and acidic residues. The segment at 185-237 (IDRSGPEHRPEFTVEVRAGEERLGTGKGPSKQAAEQAAARAALDALEGGTDGR) is disordered. Low complexity predominate over residues 216–231 (QAAEQAAARAALDALE).

It belongs to the ribonuclease III family. As to quaternary structure, homodimer. Requires Mg(2+) as cofactor.

The protein localises to the cytoplasm. It carries out the reaction Endonucleolytic cleavage to 5'-phosphomonoester.. Functionally, digests double-stranded RNA. Involved in the processing of primary rRNA transcript to yield the immediate precursors to the large and small rRNAs (23S and 16S). Processes some mRNAs, and tRNAs when they are encoded in the rRNA operon. Processes pre-crRNA and tracrRNA of type II CRISPR loci if present in the organism. This Roseiflexus sp. (strain RS-1) protein is Ribonuclease 3.